We begin with the raw amino-acid sequence, 475 residues long: Ribulose bisphosphate carboxylase large chain (475 aa).

Positions 1–2 are excised as a propeptide; that stretch reads MS. Residue Pro-3 is modified to N-acetylproline. An N6,N6,N6-trimethyllysine modification is found at Lys-14. Residues Asn-123 and Thr-173 each contribute to the substrate site. The active-site Proton acceptor is Lys-175. Position 177 (Lys-177) interacts with substrate. Mg(2+)-binding residues include Lys-201, Asp-203, and Glu-204. The residue at position 201 (Lys-201) is an N6-carboxylysine. His-294 (proton acceptor) is an active-site residue. The substrate site is built by Arg-295, His-327, and Ser-379.

The protein belongs to the RuBisCO large chain family. Type I subfamily. As to quaternary structure, heterohexadecamer of 8 large chains and 8 small chains. The cofactor is Mg(2+).

It is found in the plastid. It localises to the chloroplast. The enzyme catalyses 2 (2R)-3-phosphoglycerate + 2 H(+) = D-ribulose 1,5-bisphosphate + CO2 + H2O. It catalyses the reaction D-ribulose 1,5-bisphosphate + O2 = 2-phosphoglycolate + (2R)-3-phosphoglycerate + 2 H(+). RuBisCO catalyzes two reactions: the carboxylation of D-ribulose 1,5-bisphosphate, the primary event in carbon dioxide fixation, as well as the oxidative fragmentation of the pentose substrate in the photorespiration process. Both reactions occur simultaneously and in competition at the same active site. In Coleochaete orbicularis (Charophycean green alga), this protein is Ribulose bisphosphate carboxylase large chain.